The sequence spans 821 residues: DNA ligase (821 aa).

Residues 33 to 37, 82 to 83, and glutamate 113 contribute to the NAD(+) site; these read DVDYD and SL. Lysine 115 serves as the catalytic N6-AMP-lysine intermediate. Arginine 136, glutamate 173, lysine 290, and lysine 314 together coordinate NAD(+). Residues cysteine 408, cysteine 411, cysteine 426, and cysteine 432 each contribute to the Zn(2+) site. Residues 741–821 form the BRCT domain; sequence IVAGPLDGQT…RLLAYLAEHE (81 aa).

This sequence belongs to the NAD-dependent DNA ligase family. LigA subfamily. Mg(2+) is required as a cofactor. Requires Mn(2+) as cofactor.

It carries out the reaction NAD(+) + (deoxyribonucleotide)n-3'-hydroxyl + 5'-phospho-(deoxyribonucleotide)m = (deoxyribonucleotide)n+m + AMP + beta-nicotinamide D-nucleotide.. DNA ligase that catalyzes the formation of phosphodiester linkages between 5'-phosphoryl and 3'-hydroxyl groups in double-stranded DNA using NAD as a coenzyme and as the energy source for the reaction. It is essential for DNA replication and repair of damaged DNA. The chain is DNA ligase from Stenotrophomonas maltophilia (strain K279a).